A 731-amino-acid chain; its full sequence is Actin filament-associated protein 1 (731 aa).

Methionine 1 bears the N-acetylmethionine mark. Residues 56–90 (NNLPAPPQMPLPEIPQPWLPPDSGPPPLPTSSLPE) form a disordered region. A compositionally biased stretch (pro residues) spans 59–84 (PAPPQMPLPEIPQPWLPPDSGPPPLP). An SH3-binding motif is present at residues 70-73 (PQPW). The short motif at 93-96 (YEEA) is the SH2-binding 1 element. The tract at residues 118–139 (SSSYESYDEEEEDGKGKKTRHQ) is disordered. Residues 152–248 (DAKICAFLLR…WLKVIKEAYS (97 aa)) enclose the PH 1 domain. The interval 252–318 (GPVDPECSPP…SKSEAKGTVS (67 aa)) is disordered. The span at 271–284 (AELEKKLSSERPSS) shows a compositional bias: basic and acidic residues. A phosphoserine mark is found at serine 283 and serine 284. Residues 348–442 (DVPTCGYLNV…WIGILLAETG (95 aa)) form the PH 2 domain. The SH2-binding 2 motif lies at 452–457 (YDYIDV). The disordered stretch occupies residues 513–544 (KNKKPPASSNGVPVKGKAPSSQQKKVETAGGV). Phosphoserine is present on serine 549. A coiled-coil region spans residues 558–649 (KNRVEADAKR…VKESLKKALA (92 aa)). The interaction with F-actin stretch occupies residues 595–638 (DLRAAIEVNAGRKTQAALEDKLKRLEEECKQREAERVSLELELT). A disordered region spans residues 658 to 731 (IEPRSGTSSP…AKEWELKNGT (74 aa)). Phosphoserine is present on residues serine 665, serine 666, and serine 669. Threonine 676 bears the Phosphothreonine mark. The segment covering 678-687 (ENSPISSCDT) has biased composition (polar residues). Residues serine 680 and serine 688 each carry the phosphoserine modification. The segment covering 721 to 731 (KAKEWELKNGT) has biased composition (basic and acidic residues).

In terms of assembly, monomer and homomultimer. Interacts via its C-terminus with F-actin; probably involving AFAP1 multimers. Interacts with activated SRC SH3-SH2 domains. Interacts via its PH 1 domain with PRKCA, PRKCB and PRKCI. In terms of processing, phosphorylated on tyrosine residues by SRC.

The protein localises to the cytoplasm. Its subcellular location is the cytoskeleton. It localises to the stress fiber. Functionally, can cross-link actin filaments into both network and bundle structures. May modulate changes in actin filament integrity and induce lamellipodia formation. May function as an adapter molecule that links other proteins, such as SRC and PKC to the actin cytoskeleton. This Mus musculus (Mouse) protein is Actin filament-associated protein 1 (Afap1).